Reading from the N-terminus, the 245-residue chain is MLDTAKSSIRQQQHPLISRLADLILSYWEKYLELDPYQLPDGLGYVEGRLEGEKLVIENHCYHTPQFRKMHLELAKLGNNLDILHCVMFPNPHYPLPMFGCDIVASKAGVSAAIADLSPTNPQGTLPTTYQKVLSSLPKRDFSQRRDLPPWGDIFSEFCLFIRPTNSTEETFFLERVEQFLELHCRQSLIAQPLSSNEQALYLAGQYNYCSQQQKNDKTRRVLEKAFGAEWADKYINLVLFDLPD.

Belongs to the HY2 family.

It carries out the reaction (2R,3Z)-phycocyanobilin + 4 oxidized [2Fe-2S]-[ferredoxin] = biliverdin IXalpha + 4 reduced [2Fe-2S]-[ferredoxin] + 4 H(+). Its function is as follows. Catalyzes the four-electron reduction of biliverdin IX-alpha (2-electron reduction at both the A and D rings); the reaction proceeds via an isolatable 2-electron intermediate, 181,182-dihydrobiliverdin. In Gloeothece citriformis (strain PCC 7424) (Cyanothece sp. (strain PCC 7424)), this protein is Phycocyanobilin:ferredoxin oxidoreductase.